A 340-amino-acid polypeptide reads, in one-letter code: Nuclear transcription factor Y subunit A-3 (340 aa).

A disordered region spans residues 43–116 (SLSLKVDSRP…KGFASNPKQG (74 aa)). A compositionally biased stretch (low complexity) spans 60-77 (QISFQDQDSSSTQSTGQS). Positions 78-103 (YTEVASSGDDNPSRQISFSAKSGSEI) are enriched in polar residues. The short motif at 182–205 (FVNAKQYHAIMRRRQQRAKLEAQN) is the Subunit association domain (SAD) element. The NFYA/HAP2-type DNA-binding region spans 212–237 (KPYLHESRHVHALKRPRGSGGRFLNT).

It belongs to the NFYA/HAP2 subunit family. In terms of assembly, heterotrimeric transcription factor composed of three components, NF-YA, NF-YB and NF-YC. NF-YB and NF-YC must interact and dimerize for NF-YA association and DNA binding. As to expression, ubiquitous.

Its subcellular location is the nucleus. Functionally, stimulates the transcription of various genes by recognizing and binding to a CCAAT motif in promoters. This is Nuclear transcription factor Y subunit A-3 (NFYA3) from Arabidopsis thaliana (Mouse-ear cress).